Here is a 283-residue protein sequence, read N- to C-terminus: Acetylglutamate kinase (283 aa).

Substrate-binding positions include 63-64, Arg-85, and Asn-179; that span reads GG.

Belongs to the acetylglutamate kinase family. ArgB subfamily.

It localises to the cytoplasm. It catalyses the reaction N-acetyl-L-glutamate + ATP = N-acetyl-L-glutamyl 5-phosphate + ADP. It functions in the pathway amino-acid biosynthesis; L-arginine biosynthesis; N(2)-acetyl-L-ornithine from L-glutamate: step 2/4. Catalyzes the ATP-dependent phosphorylation of N-acetyl-L-glutamate. This chain is Acetylglutamate kinase, found in Clostridium kluyveri (strain NBRC 12016).